Consider the following 35-residue polypeptide: Photosystem II reaction center protein T (35 aa).

The chain crosses the membrane as a helical span at residues 3 to 23; sequence AFAYTLLMTLVVATLFFAVAF.

The protein belongs to the PsbT family. As to quaternary structure, PSII is composed of 1 copy each of membrane proteins PsbA, PsbB, PsbC, PsbD, PsbE, PsbF, PsbH, PsbI, PsbJ, PsbK, PsbL, PsbM, PsbT, PsbX, PsbY, Psb30/Ycf12, peripheral proteins PsbO, CyanoQ (PsbQ), PsbU, PsbV and a large number of cofactors. It forms dimeric complexes.

It is found in the cellular thylakoid membrane. Found at the monomer-monomer interface of the photosystem II (PS II) dimer, plays a role in assembly and dimerization of PSII. PSII is a light-driven water plastoquinone oxidoreductase, using light energy to abstract electrons from H(2)O, generating a proton gradient subsequently used for ATP formation. The protein is Photosystem II reaction center protein T of Prochlorococcus marinus (strain MIT 9303).